Reading from the N-terminus, the 511-residue chain is Pentatricopeptide repeat-containing protein At5g08510 (511 aa).

PPR repeat units lie at residues 46–80, 81–115, 116–146, 147–181, 182–213, 214–248, 249–279, 281–315, 316–346, and 352–382; these read CTFL…GLRP, SHHT…GFES, DSFC…MSKR, DVPV…NVTS, WTTV…SVKP, NHIT…GFFD, NIYV…LGNQ, NLCS…GEKP, DAVT…MEEV, and KLEH…MPMK. The interval 387–462 is type E motif; it reads VWGTLLGACS…AAGYSYFVEV (76 aa). The segment at 463–494 is type E(+) motif; sequence GVDVHKFTVEDKSHPRSYEIYQVLEEIFRRMK.

Belongs to the PPR family. PCMP-E subfamily.

This chain is Pentatricopeptide repeat-containing protein At5g08510 (PCMP-E20), found in Arabidopsis thaliana (Mouse-ear cress).